The primary structure comprises 304 residues: Xylanase inhibitor protein 1 (304 aa).

Positions 1–30 (MAPLAARRPACLLALLSVAAALFLTPTALA) are cleaved as a signal peptide. The region spanning 36–304 (GQVTVFWGRN…NYSSLIKYYA (269 aa)) is the GH18 domain. Cys-55 and Cys-96 form a disulfide bridge. N-linked (GlcNAc...) asparagine glycosylation is present at Asn-119. Glu-158 serves as the catalytic Proton donor. Positions 178–184 (IRGGPGK) are interaction with fungal GH11 xylanase. A disulfide bridge links Cys-194 with Cys-225. An interaction with fungal GH10 xylanase region spans residues 262 to 275 (HPKNVYYGVAPVAQ). A glycan (N-linked (GlcNAc...) asparagine) is linked at Asn-295.

The protein belongs to the glycosyl hydrolase 18 family. Xylanase inhibitor subfamily. In terms of assembly, binds to fungal GH10 and GH11 xylanases. Also forms a ternary complex with barley alpha-amylase 1 (AMY1) and insoluble starch.

It localises to the secreted. In terms of biological role, fungal xylanase inhibitor. Possesses competitive inhibiting activity against fungal endo-1,4-beta-D-xylanases belonging to glycoside hydrolase family 10 (GH10) and family 11 (GH11). Possesses also inhibitory activity towards barley alpha-amylases. Binding to xylanases or amylases is necessary for inhibition activity. May function in plant defense against secreted fungal pathogen xylanases. Is similar to class III chitinases, but does not exhibit chitinase activity. This Triticum aestivum (Wheat) protein is Xylanase inhibitor protein 1.